Here is a 458-residue protein sequence, read N- to C-terminus: tRNA modification GTPase MnmE (458 aa).

3 residues coordinate (6S)-5-formyl-5,6,7,8-tetrahydrofolate: arginine 28, glutamate 85, and lysine 124. One can recognise a TrmE-type G domain in the interval 220–381; sequence GMNVVIAGRP…LKEHLKAVMG (162 aa). Asparagine 230 lines the K(+) pocket. GTP-binding positions include 230-235, 249-255, and 274-277; these read NAGKSS, TDIEGTT, and DTAG. A Mg(2+)-binding site is contributed by serine 234. Positions 249, 251, and 254 each coordinate K(+). Residue threonine 255 coordinates Mg(2+). Residue lysine 458 coordinates (6S)-5-formyl-5,6,7,8-tetrahydrofolate.

This sequence belongs to the TRAFAC class TrmE-Era-EngA-EngB-Septin-like GTPase superfamily. TrmE GTPase family. As to quaternary structure, homodimer. Heterotetramer of two MnmE and two MnmG subunits. K(+) serves as cofactor.

It is found in the cytoplasm. Functionally, exhibits a very high intrinsic GTPase hydrolysis rate. Involved in the addition of a carboxymethylaminomethyl (cmnm) group at the wobble position (U34) of certain tRNAs, forming tRNA-cmnm(5)s(2)U34. The sequence is that of tRNA modification GTPase MnmE from Chromohalobacter salexigens (strain ATCC BAA-138 / DSM 3043 / CIP 106854 / NCIMB 13768 / 1H11).